A 477-amino-acid polypeptide reads, in one-letter code: Pup--protein ligase (477 aa).

Residue glutamate 16 participates in Mg(2+) binding. Residue arginine 60 coordinates ATP. Residue tyrosine 62 participates in Mg(2+) binding. Catalysis depends on aspartate 64, which acts as the Proton acceptor. Position 70 (glutamate 70) interacts with Mg(2+). Residues threonine 73 and tryptophan 441 each coordinate ATP.

This sequence belongs to the Pup ligase/Pup deamidase family. Pup-conjugating enzyme subfamily.

The enzyme catalyses ATP + [prokaryotic ubiquitin-like protein]-L-glutamate + [protein]-L-lysine = ADP + phosphate + N(6)-([prokaryotic ubiquitin-like protein]-gamma-L-glutamyl)-[protein]-L-lysine.. It participates in protein degradation; proteasomal Pup-dependent pathway. It functions in the pathway protein modification; protein pupylation. In terms of biological role, catalyzes the covalent attachment of the prokaryotic ubiquitin-like protein modifier Pup to the proteasomal substrate proteins, thereby targeting them for proteasomal degradation. This tagging system is termed pupylation. The ligation reaction involves the side-chain carboxylate of the C-terminal glutamate of Pup and the side-chain amino group of a substrate lysine. In Corynebacterium kroppenstedtii (strain DSM 44385 / JCM 11950 / CIP 105744 / CCUG 35717), this protein is Pup--protein ligase.